A 167-amino-acid polypeptide reads, in one-letter code: UPF0179 protein PAE0681 (167 aa).

The interval 142 to 167 (PSPSGSSISATSQGPSRAPPSRRLLK) is disordered. The segment covering 145 to 157 (SGSSISATSQGPS) has biased composition (low complexity).

Belongs to the UPF0179 family.

This chain is UPF0179 protein PAE0681, found in Pyrobaculum aerophilum (strain ATCC 51768 / DSM 7523 / JCM 9630 / CIP 104966 / NBRC 100827 / IM2).